Here is a 475-residue protein sequence, read N- to C-terminus: tRNA-2-methylthio-N(6)-dimethylallyladenosine synthase (475 aa).

The span at 1–10 (MQETTVKRDG) shows a compositional bias: basic and acidic residues. The interval 1 to 22 (MQETTVKRDGASPSDAGTPATT) is disordered. Residues 27–144 (GKLYIRTFGC…LPDLIKRRRA (118 aa)) form the MTTase N-terminal domain. Residues Cys36, Cys73, Cys107, Cys181, Cys185, and Cys188 each contribute to the [4Fe-4S] cluster site. The Radical SAM core domain occupies 167–400 (RVDGATAFVS…QALINQQAAA (234 aa)). The TRAM domain occupies 403-466 (QGMIGTRQRV…TNSLRGRVAG (64 aa)).

It belongs to the methylthiotransferase family. MiaB subfamily. In terms of assembly, monomer. The cofactor is [4Fe-4S] cluster.

The protein localises to the cytoplasm. The enzyme catalyses N(6)-dimethylallyladenosine(37) in tRNA + (sulfur carrier)-SH + AH2 + 2 S-adenosyl-L-methionine = 2-methylsulfanyl-N(6)-dimethylallyladenosine(37) in tRNA + (sulfur carrier)-H + 5'-deoxyadenosine + L-methionine + A + S-adenosyl-L-homocysteine + 2 H(+). Functionally, catalyzes the methylthiolation of N6-(dimethylallyl)adenosine (i(6)A), leading to the formation of 2-methylthio-N6-(dimethylallyl)adenosine (ms(2)i(6)A) at position 37 in tRNAs that read codons beginning with uridine. The sequence is that of tRNA-2-methylthio-N(6)-dimethylallyladenosine synthase from Bordetella bronchiseptica (strain ATCC BAA-588 / NCTC 13252 / RB50) (Alcaligenes bronchisepticus).